We begin with the raw amino-acid sequence, 87 residues long: Putative defensin-like protein 235 (87 aa).

Positions 1 to 26 are cleaved as a signal peptide; sequence MRSATFFLVSCVLMSFVLSHVKEVEA. Disulfide bonds link C46-C73, C54-C82, and C71-C84.

This sequence belongs to the DEFL family.

It is found in the secreted. This Arabidopsis thaliana (Mouse-ear cress) protein is Putative defensin-like protein 235 (SCRL26).